The sequence spans 750 residues: Photosystem I P700 chlorophyll a apoprotein A1 (750 aa).

A run of 8 helical transmembrane segments spans residues 70–93, 156–179, 195–219, 291–309, 346–369, 385–411, 433–455, and 531–549; these read VFSA…FHGA, LYCT…FHYH, LNHH…HVSL, IAHH…GHMY, WHAQ…HHMY, LSLF…IFMV, AIIS…LYIH, and FLVH…LILL. [4Fe-4S] cluster-binding residues include Cys-573 and Cys-582. A run of 2 helical transmembrane segments spans residues 589-610 and 664-686; these read HVFL…HFSW and LSAY…MFLF. Residue His-675 coordinates chlorophyll a'. Positions 683 and 691 each coordinate chlorophyll a. Trp-692 is a phylloquinone binding site. A helical membrane pass occupies residues 724 to 744; sequence AVGVTHYLLGGIATTWAFFLA.

Belongs to the PsaA/PsaB family. As to quaternary structure, the PsaA/B heterodimer binds the P700 chlorophyll special pair and subsequent electron acceptors. PSI consists of a core antenna complex that captures photons, and an electron transfer chain that converts photonic excitation into a charge separation. The eukaryotic PSI reaction center is composed of at least 11 subunits. P700 is a chlorophyll a/chlorophyll a' dimer, A0 is one or more chlorophyll a, A1 is one or both phylloquinones and FX is a shared 4Fe-4S iron-sulfur center. serves as cofactor.

It localises to the plastid. Its subcellular location is the chloroplast thylakoid membrane. The enzyme catalyses reduced [plastocyanin] + hnu + oxidized [2Fe-2S]-[ferredoxin] = oxidized [plastocyanin] + reduced [2Fe-2S]-[ferredoxin]. Functionally, psaA and PsaB bind P700, the primary electron donor of photosystem I (PSI), as well as the electron acceptors A0, A1 and FX. PSI is a plastocyanin-ferredoxin oxidoreductase, converting photonic excitation into a charge separation, which transfers an electron from the donor P700 chlorophyll pair to the spectroscopically characterized acceptors A0, A1, FX, FA and FB in turn. Oxidized P700 is reduced on the lumenal side of the thylakoid membrane by plastocyanin. The sequence is that of Photosystem I P700 chlorophyll a apoprotein A1 from Populus trichocarpa (Western balsam poplar).